Reading from the N-terminus, the 308-residue chain is Growth/differentiation factor 15 (308 aa).

Positions Met1–Ala29 are cleaved as a signal peptide. Positions Leu30 to Arg194 are excised as a propeptide. Asn70 is a glycosylation site (N-linked (GlcNAc...) asparagine). A disordered region spans residues Ala152–Arg177. A compositionally biased stretch (polar residues) spans Gln165–Arg177. 4 cysteine pairs are disulfide-bonded: Cys203–Cys210, Cys211–Cys274, Cys240–Cys305, and Cys244–Cys307.

Belongs to the TGF-beta family. As to quaternary structure, homodimer; disulfide-linked. Interacts with GFRAL and RET; ligand of GFRAL, which mediates GDF15 internalization and cellular signaling through interaction with RET via the formation of a 2:2:2 ternary complex composed of GDF15, GFRAL and RET. In terms of tissue distribution, detected in plasma (at protein level). Highly expressed in placenta, with lower levels in prostate and colon and some expression in kidney.

The protein resides in the secreted. Hormone produced in response to various stresses to confer information about those stresses to the brain, and trigger an aversive response, characterized by nausea, vomiting, and/or loss of appetite. The aversive response is both required to reduce continuing exposure to those stresses at the time of exposure and to promote avoidance behavior in the future. Acts by binding to its receptor, GFRAL, activating GFRAL-expressing neurons localized in the area postrema and nucleus tractus solitarius of the brainstem. It then triggers the activation of neurons localized within the parabrachial nucleus and central amygdala, which constitutes part of the 'emergency circuit' that shapes responses to stressful conditions. The GDF15-GFRAL signal induces expression of genes involved in metabolism, such as lipid metabolism in adipose tissues. Required for avoidance behavior in response to food allergens: induced downstream of mast cell activation to promote aversion and minimize harmful effects of exposure to noxious substances. In addition to suppress appetite, also promotes weight loss by enhancing energy expenditure in muscle: acts by increasing calcium futile cycling in muscle. Contributes to the effect of metformin, an anti-diabetic drug, on appetite reduction and weight loss: produced in the kidney in response to metformin treatment, thereby activating the GDF15-GFRAL response, leading to reduced appetite and weight. The contribution of GDF15 to weight loss following metformin treatment is however limited and subject to discussion. Produced in response to anticancer drugs, such as camptothecin or cisplatin, promoting nausea, vomiting and contributing to malnutrition. Overproduced in many cancers, promoting anorexia in cancer (cachexia). Responsible for the risk of nausea and vomiting during pregnancy: high levels of GDF15 during pregnancy, mostly originating from the fetus, are associated with increased nausea and vomiting. Maternal sensitivity to nausea is probably determined by pre-pregnancy exposure to GDF15, women with naturally high level of GDF15 being less susceptible to nausea than women with low levels of GDF15 before pregnancy. Promotes metabolic adaptation in response to systemic inflammation caused by bacterial and viral infections in order to promote tissue tolerance and prevent tissue damage. Required for tissue tolerance in response to myocardial infarction by acting as an inhibitor of leukocyte integring activation, thereby protecting against cardiac rupture. Inhibits growth hormone signaling on hepatocytes. This is Growth/differentiation factor 15 from Homo sapiens (Human).